We begin with the raw amino-acid sequence, 513 residues long: Probable DNA ligase (513 aa).

Glu213 is a binding site for ATP. The N6-AMP-lysine intermediate role is filled by Lys215. ATP-binding residues include Arg220, Arg235, Glu264, Phe304, Arg376, and Lys382.

The protein belongs to the ATP-dependent DNA ligase family. The cofactor is Mg(2+).

It catalyses the reaction ATP + (deoxyribonucleotide)n-3'-hydroxyl + 5'-phospho-(deoxyribonucleotide)m = (deoxyribonucleotide)n+m + AMP + diphosphate.. Functionally, DNA ligase that seals nicks in double-stranded DNA during DNA replication, DNA recombination and DNA repair. The chain is Probable DNA ligase from Anaeromyxobacter dehalogenans (strain 2CP-C).